The sequence spans 808 residues: Probable E3 ubiquitin-protein ligase hulA (808 aa).

The C2 domain occupies 1 to 112; the sequence is MGSNLPAQPN…QMGGDEMLTR (112 aa). 2 disordered regions span residues 134–231 and 275–346; these read NLST…GWER and RRAH…YFVD. Polar residues-rich tracts occupy residues 142–159 and 171–198; these read QANG…SSGL and GPSQ…PSST. A compositionally biased stretch (low complexity) spans 199 to 210; sequence VAPVNGAAAPGA. Positions 211-220 are enriched in polar residues; that stretch reads SRTNLSSFED. Positions 223 to 256 constitute a WW 1 domain; that stretch reads GRLPAGWERREDNLGRTYYVDHNTRTTTWTRPSS. Residues 275 to 288 show a composition bias toward basic and acidic residues; that stretch reads RRAHQSRMLPEDRT. Over residues 289–303 the composition is skewed to polar residues; the sequence is GASSPNLQENQQAQT. Residues 317 to 326 are compositionally biased toward low complexity; the sequence is ATGATTAGTG. 2 consecutive WW domains span residues 326 to 359 and 386 to 419; these read GELP…DPRR and GPLP…DPRL. The region spanning 475 to 808 is the HECT domain; sequence SASDLKKRLM…VEETLGFGQE (334 aa). Catalysis depends on cysteine 776, which acts as the Glycyl thioester intermediate.

The protein belongs to the RSP5/NEDD4 family. Interacts with creD.

Its subcellular location is the cytoplasm. It catalyses the reaction S-ubiquitinyl-[E2 ubiquitin-conjugating enzyme]-L-cysteine + [acceptor protein]-L-lysine = [E2 ubiquitin-conjugating enzyme]-L-cysteine + N(6)-ubiquitinyl-[acceptor protein]-L-lysine.. It participates in protein modification; protein ubiquitination. E3 ubiquitin-protein ligase which accepts ubiquitin from an E2 ubiquitin-conjugating enzyme in the form of a thioester and then directly transfers the ubiquitin to targeted substrates. Probably involved in the regulatory network controlling carbon source utilization. This chain is Probable E3 ubiquitin-protein ligase hulA (hulA), found in Aspergillus terreus (strain NIH 2624 / FGSC A1156).